Consider the following 228-residue polypeptide: Superoxide dismutase [Mn], mitochondrial (228 aa).

A mitochondrion-targeting transit peptide spans Met1–Gly24. Residues His52, His100, Asp189, and His193 each contribute to the Mn(2+) site.

It belongs to the iron/manganese superoxide dismutase family. Homotetramer. It depends on Mn(2+) as a cofactor.

The protein localises to the mitochondrion matrix. The enzyme catalyses 2 superoxide + 2 H(+) = H2O2 + O2. Destroys superoxide anion radicals which are normally produced within the cells and which are toxic to biological systems. In Nicotiana plumbaginifolia (Leadwort-leaved tobacco), this protein is Superoxide dismutase [Mn], mitochondrial (SODA).